Consider the following 102-residue polypeptide: A-type ATP synthase subunit F (102 aa).

This sequence belongs to the V-ATPase F subunit family. In terms of assembly, has multiple subunits with at least A(3), B(3), C, D, E, F, H, I and proteolipid K(x).

It is found in the cell membrane. Component of the A-type ATP synthase that produces ATP from ADP in the presence of a proton gradient across the membrane. In Thermococcus gammatolerans (strain DSM 15229 / JCM 11827 / EJ3), this protein is A-type ATP synthase subunit F.